Here is a 205-residue protein sequence, read N- to C-terminus: FAS-associated death domain protein (205 aa).

The region spanning 3–81 (PFLVLLHSLS…RHDLLQRLDD (79 aa)) is the DED domain. A Death domain is found at 97 to 181 (LQVAFDIVCD…LVADLVEEAQ (85 aa)). The segment at 181–205 (QESVSKSENMSPVLRDSTVSSSETP) is disordered. Residue Ser191 is modified to Phosphoserine.

In terms of assembly, can self-associate. Component of the AIM2 PANoptosome complex, a multiprotein complex that drives inflammatory cell death (PANoptosis). Component of the death-induced signaling complex (DISC) composed of cell surface receptor FAS/CD95 or TNFRSF1A, adapter protein FADD and the CASP8 protease; recruitment of CASP8 to the complex is required for processing of CASP8 into the p18 and p10 subunits. Interacts (via death domain) with FAS (via death domain). Interacts directly (via DED domain) with NOL3 (via CARD domain); inhibits death-inducing signaling complex (DISC) assembly by inhibiting the increase in FAS-FADD binding induced by FAS activation. Interacts with CFLAR, PEA15 and MBD4. When phosphorylated, part of a complex containing HIPK3 and FAS. May interact with MAVS/IPS1. Interacts with MOCV v-CFLAR protein and PIDD1. Interacts with RIPK1 and TRADD. Interacts with stimulated TNFRSF10B. Interacts with DDX24.

Its subcellular location is the cytoplasm. Its function is as follows. Apoptotic adapter molecule that recruits caspases CASP8 or CASP10 to the activated FAS/CD95 or TNFRSF1A/TNFR-1 receptors. The resulting aggregate called the death-inducing signaling complex (DISC) performs CASP8 proteolytic activation. Active CASP8 initiates the subsequent cascade of caspases mediating apoptosis. Involved in interferon-mediated antiviral immune response, playing a role in the positive regulation of interferon signaling. The chain is FAS-associated death domain protein from Mus musculus (Mouse).